Consider the following 360-residue polypeptide: LETM1 domain-containing protein 1 (360 aa).

The interval 1 to 110 (MALSRVCWAR…KKARRIKTNM (110 aa)) is required and sufficient for mitochondrial import. Topologically, residues 1 to 137 (MALSRVCWAR…LRQFRRDVTK (137 aa)) are cytoplasmic. The chain crosses the membrane as a helical span at residues 138–158 (CLFLGILSIPPFANYLVFLLM). Residues 159-360 (YLFPRQLLIR…LSINYVGSRR (202 aa)) are Mitochondrial intermembrane-facing. Residues 186–360 (LRKQSHPEIL…LSINYVGSRR (175 aa)) form the Letm1 RBD domain.

As to quaternary structure, interacts with BRI3BP. Interacts (via C-terminal) with SMARCA4; the interaction regulates transcriptional expression of thermogenic genes in brown adipose tissue.

The protein localises to the mitochondrion outer membrane. It localises to the nucleus. It is found in the mitochondrion inner membrane. Plays an essential role for mitochondrial structure and function, as well as thermogenesis of brown adipocytes. In brown adipose tissue also localizes in the nucleus where it interacts with the chromatin remodeler SMARCA4 to regulate thermogenic genes expression, such as UCP1. May regulate phagocytosis and inflammatory responses to lipopolysaccharide in macrophages. Involved in tumorigenesis and may function as a negative regulator of the p53/TP53. This Bos taurus (Bovine) protein is LETM1 domain-containing protein 1.